The following is a 230-amino-acid chain: Interleukin-6 (230 aa).

The N-terminal stretch at 1 to 24 (MASKHNADLSSAAMLAALLLCALG) is a signal peptide. A disulfide bridge links C96 with C106. N100 carries an N-linked (GlcNAc...) asparagine glycan. Positions 206–218 (REMPKQKRRKDDG) are enriched in basic and acidic residues. Positions 206-230 (REMPKQKRRKDDGIIPPIHPSYQMT) are disordered.

Belongs to the IL-6 superfamily. Component of a hexamer of two molecules each of IL6, IL6R and IL6ST; first binds to IL6R to associate with the signaling subunit IL6ST. Expressed in kidney and spleen. Low expression in liver and gills.

It localises to the secreted. Cytokine with a wide variety of biological functions in immunity, tissue regeneration, and metabolism. Binds to IL6R, then the complex associates to the signaling subunit IL6ST/gp130 to trigger the intracellular IL6-signaling pathway. The interaction with the membrane-bound IL6R and IL6ST stimulates 'classic signaling', whereas the binding of IL6 and soluble IL6R to IL6ST stimulates 'trans-signaling'. Alternatively, 'cluster signaling' occurs when membrane-bound IL6:IL6R complexes on transmitter cells activate IL6ST receptors on neighboring receiver cells. The sequence is that of Interleukin-6 (il6) from Paralichthys olivaceus (Bastard halibut).